The following is a 331-amino-acid chain: N-arachidonyl glycine receptor (331 aa).

Over 1-26 (MAIPSNRDQLALSNGSHPEEYKIAAL) the chain is Extracellular. The N-linked (GlcNAc...) asparagine glycan is linked to asparagine 14. A helical membrane pass occupies residues 27–47 (VFYSCIFLIGLLVNVTALWVF). Topologically, residues 48–56 (SCTTKKRTT) are cytoplasmic. The helical transmembrane segment at 57–77 (VTIYMMNVALLDLVFILSLPF) threads the bilayer. At 78 to 95 (RMFYYAKGEWPFGDYFCH) the chain is on the extracellular side. Residues cysteine 94 and cysteine 172 are joined by a disulfide bond. A helical membrane pass occupies residues 96 to 116 (ILGALVVFYPSLALWLLALIS). At 117–138 (ADRYMAIVQPKYAKELKNTGKA) the chain is on the cytoplasmic side. The helical transmembrane segment at 139–159 (VLACVGVWIMTLTTTVPLLLL) threads the bilayer. Residues 160–191 (DEDPDKASSPATCLKISDIIHLKAVNVLNFTR) lie on the Extracellular side of the membrane. Asparagine 188 is a glycosylation site (N-linked (GlcNAc...) asparagine). The helical transmembrane segment at 192–212 (LIFFFLIPLFIMIGCYVVIIH) threads the bilayer. Residues 213–236 (SLLRGQTSKLKPKVKEKSIRIIVT) are Cytoplasmic-facing. The chain crosses the membrane as a helical span at residues 237 to 257 (LLLQVLACFVPFHICFALLML). Over 258–268 (QGEENSYSPWG) the chain is Extracellular. Residues 269-289 (AFTTFLMNLSTCLDVVLYYIV) form a helical membrane-spanning segment. Topologically, residues 290 to 331 (SKQFQARVISVMLYRNYLRSVRRKSVRSGSLRSLSNMNSEML) are cytoplasmic. A Phosphoserine modification is found at serine 322.

This sequence belongs to the G-protein coupled receptor 1 family. As to expression, expressed in testis, spleen and brain (at protein level).

The protein resides in the cell membrane. Its subcellular location is the cytoplasmic vesicle membrane. In terms of biological role, g protein-coupled receptor (GPCR) that plays a role in diverse physiological processes particularly within the immune and nervous systems. Becomes active when triggered by various endogenous ligands including endocannabinoid N-arachidonyl glycine (NAGly), delta-9-tetrahydrocannabinol or resolvin D2/RvD2 derived from the omega-3 fatty acid docosahexaenoic acid (DHA). Upon RvD2 binding, facilitates the resolution of inflammation, aiding in tissue repair and homeostasis. Mechanistically, RvD2 ligation initiates Galphas protein coupling, activation of cAMP-PKA signaling pathway and phosphorylation of STAT3, leading to RvD2-stimulated macrophage phagocytosis. Mediates NAGly-induced process of reorganization of actin filaments and induction of acrosomal exocytosis. Activation by N-arachidonoyl glycine (NAGly) can also induce apoptosis in macrophages. Plays a role in homeostasis of CD8+ subsets of intraepithelial lymphocytes (IELs) (CD8alphaalpha and CD8alphabeta IELs) in small intestine by supporting preferential migration of CD8alphaalpha T-cells to intraepithelial compartment over lamina propria compartment, and by mediating their reconstitution into small intestine after bone marrow transplant. Participates also in hypotensive responses, mediating reduction in intraocular and blood pressure. The protein is N-arachidonyl glycine receptor of Rattus norvegicus (Rat).